Consider the following 269-residue polypeptide: Energy-coupling factor transporter ATP-binding protein EcfA1 (269 aa).

In terms of domain architecture, ABC transporter spans 8–242 (IEFKDVSFQY…EEALISVGLD (235 aa)). 42 to 49 (GHNGSGKS) is an ATP binding site.

The protein belongs to the ABC transporter superfamily. Energy-coupling factor EcfA family. In terms of assembly, forms a stable energy-coupling factor (ECF) transporter complex composed of 2 membrane-embedded substrate-binding proteins (S component), 2 ATP-binding proteins (A component) and 2 transmembrane proteins (T component).

Its subcellular location is the cell membrane. ATP-binding (A) component of a common energy-coupling factor (ECF) ABC-transporter complex. Unlike classic ABC transporters this ECF transporter provides the energy necessary to transport a number of different substrates. This is Energy-coupling factor transporter ATP-binding protein EcfA1 from Staphylococcus epidermidis (strain ATCC 35984 / DSM 28319 / BCRC 17069 / CCUG 31568 / BM 3577 / RP62A).